Here is a 188-residue protein sequence, read N- to C-terminus: Ion-translocating oxidoreductase complex subunit B (188 aa).

A hydrophobic region spans residues 1 to 23; the sequence is MIEAAVSMSALGLGLGLLLGVAA. The region spanning 29-88 is the 4Fe-4S domain; the sequence is ESPPIVDAIEGILPGTNCGACGYPGCRGLAEAMSEGAAPVTACAPGGRDVALALAAIVET. 12 residues coordinate [4Fe-4S] cluster: Cys-46, Cys-49, Cys-54, Cys-71, Cys-113, Cys-116, Cys-119, Cys-123, Cys-143, Cys-146, Cys-149, and Cys-153. 4Fe-4S ferredoxin-type domains are found at residues 104 to 133 and 134 to 163; these read TVAF…GANR and QIHT…ARVK.

The protein belongs to the 4Fe4S bacterial-type ferredoxin family. RnfB subfamily. The complex is composed of six subunits: RnfA, RnfB, RnfC, RnfD, RnfE and RnfG. [4Fe-4S] cluster serves as cofactor.

The protein localises to the cellular chromatophore membrane. Part of a membrane-bound complex that couples electron transfer with translocation of ions across the membrane. The chain is Ion-translocating oxidoreductase complex subunit B from Cereibacter sphaeroides (strain ATCC 17023 / DSM 158 / JCM 6121 / CCUG 31486 / LMG 2827 / NBRC 12203 / NCIMB 8253 / ATH 2.4.1.) (Rhodobacter sphaeroides).